We begin with the raw amino-acid sequence, 450 residues long: Probable ECA polymerase (450 aa).

11 consecutive transmembrane segments (helical) span residues 6–26 (FSGL…LTWF), 37–57 (VFFS…TSVL), 63–83 (VGVA…CFYA), 118–138 (VILM…NGFL), 155–175 (GVAL…VYFL), 181–201 (AWLF…MIVG), 207–227 (IIIA…ISLW), 228–248 (MLAA…LKRY), 341–361 (LVVM…GLII), 378–398 (YKAA…IVLA), and 410–430 (VFFI…YWLF).

It belongs to the WzyE family. As to quaternary structure, probably part of a complex composed of WzxE, WzyE and WzzE.

It is found in the cell inner membrane. Its pathway is bacterial outer membrane biogenesis; enterobacterial common antigen biosynthesis. Probably involved in the polymerization of enterobacterial common antigen (ECA) trisaccharide repeat units. This is Probable ECA polymerase from Escherichia coli O7:K1 (strain IAI39 / ExPEC).